Here is a 169-residue protein sequence, read N- to C-terminus: Major fimbrial subunit SMF-1 (169 aa).

The first 11 residues, 1 to 11 (MLAAAPLAANA), serve as a signal peptide directing secretion.

It belongs to the fimbrial protein family.

It localises to the fimbrium. Involved in adherence to eukaryotic epithelial cells and abiotic surfaces. Mediates agglutination of animal red blood cells. The chain is Major fimbrial subunit SMF-1 from Stenotrophomonas maltophilia (strain K279a).